A 253-amino-acid polypeptide reads, in one-letter code: Phosphate import ATP-binding protein PstB (253 aa).

The ABC transporter domain maps to 7-248; sequence MHSKGLDFFY…PGNKQTEDYI (242 aa). 39 to 46 contacts ATP; sequence GPSGCGKS.

This sequence belongs to the ABC transporter superfamily. Phosphate importer (TC 3.A.1.7) family. As to quaternary structure, the complex is composed of two ATP-binding proteins (PstB), two transmembrane proteins (PstC and PstA) and a solute-binding protein (PstS).

It is found in the cell inner membrane. The enzyme catalyses phosphate(out) + ATP + H2O = ADP + 2 phosphate(in) + H(+). Functionally, part of the ABC transporter complex PstSACB involved in phosphate import. Responsible for energy coupling to the transport system. The polypeptide is Phosphate import ATP-binding protein PstB (Oleidesulfovibrio alaskensis (strain ATCC BAA-1058 / DSM 17464 / G20) (Desulfovibrio alaskensis)).